Consider the following 599-residue polypeptide: Elongation factor 4 (599 aa).

The tr-type G domain maps to 2-184; that stretch reads KNIRNFSIIA…RLVRDIPPPE (183 aa). GTP contacts are provided by residues 14–19 and 131–134; these read DHGKST and NKID.

It belongs to the TRAFAC class translation factor GTPase superfamily. Classic translation factor GTPase family. LepA subfamily.

Its subcellular location is the cell inner membrane. The enzyme catalyses GTP + H2O = GDP + phosphate + H(+). Functionally, required for accurate and efficient protein synthesis under certain stress conditions. May act as a fidelity factor of the translation reaction, by catalyzing a one-codon backward translocation of tRNAs on improperly translocated ribosomes. Back-translocation proceeds from a post-translocation (POST) complex to a pre-translocation (PRE) complex, thus giving elongation factor G a second chance to translocate the tRNAs correctly. Binds to ribosomes in a GTP-dependent manner. The polypeptide is Elongation factor 4 (Shigella sonnei (strain Ss046)).